A 233-amino-acid chain; its full sequence is Adenosine 5'-phosphosulfate reductase (233 aa).

Cysteine 120, cysteine 121, cysteine 203, and cysteine 206 together coordinate [4Fe-4S] cluster. Cysteine 229 acts as the Nucleophile; cysteine thiosulfonate intermediate in catalysis.

The protein belongs to the PAPS reductase family. CysH subfamily. It depends on [4Fe-4S] cluster as a cofactor.

It localises to the cytoplasm. The catalysed reaction is [thioredoxin]-disulfide + sulfite + AMP + 2 H(+) = adenosine 5'-phosphosulfate + [thioredoxin]-dithiol. It functions in the pathway sulfur metabolism; hydrogen sulfide biosynthesis; sulfite from sulfate. Catalyzes the formation of sulfite from adenosine 5'-phosphosulfate (APS) using thioredoxin as an electron donor. The sequence is that of Adenosine 5'-phosphosulfate reductase from Bacillus pumilus (strain SAFR-032).